The chain runs to 105 residues: N(4)-acetylcytidine amidohydrolase (105 aa).

One can recognise an ASCH domain in the interval 7 to 93 (TFFERFEHDI…VIAEIYPGLE (87 aa)). K21 acts as the Proton acceptor in catalysis. The active-site Nucleophile is T24. E74 serves as the catalytic Proton donor.

Belongs to the N(4)-acetylcytidine amidohydrolase family.

The enzyme catalyses N(4)-acetylcytidine + H2O = cytidine + acetate + H(+). It catalyses the reaction N(4)-acetyl-2'-deoxycytidine + H2O = 2'-deoxycytidine + acetate + H(+). The catalysed reaction is N(4)-acetylcytosine + H2O = cytosine + acetate + H(+). Catalyzes the hydrolysis of N(4)-acetylcytidine (ac4C). This Shewanella baltica (strain OS155 / ATCC BAA-1091) protein is N(4)-acetylcytidine amidohydrolase.